Consider the following 146-residue polypeptide: Snaclec 1 (146 aa).

The N-terminal stretch at 1-23 is a signal peptide; that stretch reads MGRFIFMSFGLLVVFLSLSGTGA. 3 disulfide bridges follow: Cys25–Cys36, Cys53–Cys142, and Cys119–Cys134. The C-type lectin domain maps to 32–143; it reads YEGHCYRVFQ…CSRTYSFVCK (112 aa).

The protein belongs to the snaclec family. Heterodimer; disulfide-linked. As to expression, expressed by the venom gland.

The protein resides in the secreted. In terms of biological role, interferes with one step of hemostasis (modulation of platelet aggregation, or coagulation cascade, for example). In Sistrurus catenatus edwardsii (Desert massasauga), this protein is Snaclec 1.